We begin with the raw amino-acid sequence, 429 residues long: UDP-N-acetylglucosamine 1-carboxyvinyltransferase (429 aa).

Residue 22-23 (KN) participates in phosphoenolpyruvate binding. Arg102 serves as a coordination point for UDP-N-acetyl-alpha-D-glucosamine. The Proton donor role is filled by Cys126. Cys126 is modified (2-(S-cysteinyl)pyruvic acid O-phosphothioketal). 2 residues coordinate UDP-N-acetyl-alpha-D-glucosamine: Asp316 and Ile338.

It belongs to the EPSP synthase family. MurA subfamily.

The protein resides in the cytoplasm. It catalyses the reaction phosphoenolpyruvate + UDP-N-acetyl-alpha-D-glucosamine = UDP-N-acetyl-3-O-(1-carboxyvinyl)-alpha-D-glucosamine + phosphate. It functions in the pathway cell wall biogenesis; peptidoglycan biosynthesis. Functionally, cell wall formation. Adds enolpyruvyl to UDP-N-acetylglucosamine. The protein is UDP-N-acetylglucosamine 1-carboxyvinyltransferase of Methylorubrum extorquens (strain PA1) (Methylobacterium extorquens).